The following is an 847-amino-acid chain: MDGRAEMEVVRTTKGNAAGEVSVHVVTTESTVQSTHLPTTAFIFPSQANATTINLPTSTLEIQRFPREPPRNTGAERPEKGVGSEPITATVIPQISGVQTCNTVRVLEWKDGVATLPGSNLRFRINEYGTLKVVSADKMPPAEAVKEGHAKKDGDSDVAPTSRDNTIVAQDVPEQSKLPTADSICHCDTCGRRHVSDGAREGRGFCSEHCHQQFKERSVIVENSASSTSATEILKPVKKRKRKDYQSPSEEDYESEQMEEKQEEMKNSVGDSAISNPEAHAWSQHSTEGPGASEEKKEGWSWASYLEEQKAVAAPLDLFQDYQVASQHKNGFKVGMKLEGIDPQHPSMYFILTVAEVCGYRMRLHFDGYSECHDFWLNADSPDIHPAGWFEETGHKLQPPKGYKEEEFSWTNYLKITKAQAAPKHLFVIRNTHEAPPGFEVGMKLEAVDRMNPSLICVATVTDVVDDRFLVHFDNWDDTYDYWCDPSSPYIHPVGWCQEHGKPLTPPQDYPDPDNFIWEKYLKETGASAVPAWAFKVRPPHGFLVNMKLEAVDRRTPSFIRVASVEDVEDHRIKIHFDGWSHVYDFWIDADHPDIHPIGWCSKTGHPLQPPLRPKEPASSAHSGCPTLGCKNIPHTKSSKYSFHHRKCPTPGCDGSGHVTGRFTAHYCLSGCPLAEKNQGKLKADLSDTEASTRKRNLIGFPQRKKSRHHGSFRGRPPKYRKIQQEDFQTISSDNMHQSLFMSALSAHPDRSLSLCWEQHCKLLPGVAGITATTVAKWTIDEVFSFVQTLTGCEDQAKLFKDEMIDGEAFLLLTQADIVKIMSVKLGPALKIYNAILMFKNADDTLK.

Composition is skewed to basic and acidic residues over residues 65–82 and 144–155; these read FPRE…EKGV and AVKEGHAKKDGD. Disordered stretches follow at residues 65-87, 142-163, and 237-296; these read FPRE…SEPI, AEAV…PTSR, and VKKR…SEEK. 3 MBT repeats span residues 300 to 400, 408 to 507, and 516 to 611; these read WSWA…LQPP, FSWT…LTPP, and FIWE…LQPP. The interval 473–480 is interaction with monomethylated and dimethylated peptides; it reads FDNWDDTY. The CCHHC-type zinc finger occupies 639-682; the sequence is SKYSFHHRKCPTPGCDGSGHVTGRFTAHYCLSGCPLAEKNQGKL. Cys-648, Cys-653, His-666, and Cys-672 together coordinate Zn(2+). Positions 778–842 constitute an SAM domain; that stretch reads WTIDEVFSFV…YNAILMFKNA (65 aa).

As to quaternary structure, homodimer.

It is found in the nucleus. Polycomb group (PcG) protein that specifically recognizes and binds mono- and dimethyllysine residues on target proteins, thereby acting as a 'reader' of a network of post-translational modifications. PcG proteins maintain the transcriptionally repressive state of genes: acts as a chromatin compaction factor by recognizing and binding mono- and dimethylated histone H1b/H1-4 at 'Lys-26' (H1bK26me1 and H1bK26me2) and histone H4 at 'Lys-20' (H4K20me1 and H4K20me2), leading to condense chromatin and repress transcription. This chain is Lethal(3)malignant brain tumor-like protein 1 (L3MBTL1), found in Gallus gallus (Chicken).